A 162-amino-acid polypeptide reads, in one-letter code: 2-C-methyl-D-erythritol 2,4-cyclodiphosphate synthase (162 aa).

A divalent metal cation is bound by residues aspartate 10 and histidine 12. Residues 10–12 and 36–37 each bind 4-CDP-2-C-methyl-D-erythritol 2-phosphate; these read DVH and HS. An a divalent metal cation-binding site is contributed by histidine 44. 4-CDP-2-C-methyl-D-erythritol 2-phosphate contacts are provided by residues 58 to 60, 63 to 67, and arginine 144; these read DIG and FPDTD.

It belongs to the IspF family. Homotrimer. The cofactor is a divalent metal cation.

It catalyses the reaction 4-CDP-2-C-methyl-D-erythritol 2-phosphate = 2-C-methyl-D-erythritol 2,4-cyclic diphosphate + CMP. It functions in the pathway isoprenoid biosynthesis; isopentenyl diphosphate biosynthesis via DXP pathway; isopentenyl diphosphate from 1-deoxy-D-xylulose 5-phosphate: step 4/6. Functionally, involved in the biosynthesis of isopentenyl diphosphate (IPP) and dimethylallyl diphosphate (DMAPP), two major building blocks of isoprenoid compounds. Catalyzes the conversion of 4-diphosphocytidyl-2-C-methyl-D-erythritol 2-phosphate (CDP-ME2P) to 2-C-methyl-D-erythritol 2,4-cyclodiphosphate (ME-CPP) with a corresponding release of cytidine 5-monophosphate (CMP). This is 2-C-methyl-D-erythritol 2,4-cyclodiphosphate synthase from Laribacter hongkongensis (strain HLHK9).